A 152-amino-acid chain; its full sequence is Nucleoside diphosphate kinase (152 aa).

6 residues coordinate ATP: Lys11, Phe59, Arg87, Thr93, Arg104, and Asn114. The active-site Pros-phosphohistidine intermediate is the His117.

This sequence belongs to the NDK family. As to quaternary structure, homotetramer. Mg(2+) is required as a cofactor.

It is found in the cytoplasm. It catalyses the reaction a 2'-deoxyribonucleoside 5'-diphosphate + ATP = a 2'-deoxyribonucleoside 5'-triphosphate + ADP. It carries out the reaction a ribonucleoside 5'-diphosphate + ATP = a ribonucleoside 5'-triphosphate + ADP. Its function is as follows. Major role in the synthesis of nucleoside triphosphates other than ATP. The ATP gamma phosphate is transferred to the NDP beta phosphate via a ping-pong mechanism, using a phosphorylated active-site intermediate. The protein is Nucleoside diphosphate kinase of Prochlorococcus marinus subsp. pastoris (strain CCMP1986 / NIES-2087 / MED4).